The following is a 1484-amino-acid chain: Cystic fibrosis transmembrane conductance regulator (1484 aa).

At 1–77 (MQRSPLEKAS…KLINALRRCF (77 aa)) the chain is on the cytoplasmic side. A helical membrane pass occupies residues 78 to 98 (FWRFMFYGIILYLGEVTKSVQ). Positions 81–365 (FMFYGIILYL…WAVQTWYDSL (285 aa)) constitute an ABC transmembrane type-1 1 domain. Residues 99-122 (PLLLGRIIASYDPDNKEERSIAIY) lie on the Extracellular side of the membrane. The helical transmembrane segment at 123–146 (LGIGLCLLFVMRTLLLHPAIFGLH) threads the bilayer. Topologically, residues 147-195 (RIGMQMRIAMFSLIYKKTLKLSSRVLDKISIGQLVSLLSNNLNKFDEGL) are cytoplasmic. Residues 196–216 (ALAHFVWIAPLQVTLLMGLLW) form a helical membrane-spanning segment. The Extracellular segment spans residues 217–222 (DLLQAS). Residues 223-243 (AFCGLAFLIVLALFQAGLGRM) form a helical membrane-spanning segment. Topologically, residues 244–298 (MMKYRDQRAGKINERLVITSEMIENIQSVKAYCWEEAMEKMIESIRQTELKLTRK) are cytoplasmic. The helical transmembrane segment at 299-319 (AAYVRYFNSSAFFFSGFFVVF) threads the bilayer. The Extracellular segment spans residues 320-339 (LSVLPYALIKTIVLRKIFTT). The chain crosses the membrane as a helical span at residues 340-358 (ISFCIVLRMAVTRQFPWAV). The Cytoplasmic portion of the chain corresponds to 359 to 860 (QTWYDSLGAI…YLRYVTIHKS (502 aa)). ATP contacts are provided by residues Trp401, Ser434, 458-465 (GSTGAGKT), and Gln493. An ABC transporter 1 domain is found at 423 to 646 (NADNSLFFSN…RPDFSSKLMG (224 aa)). Cys524 carries the S-palmitoyl cysteine lipid modification. Phosphoserine is present on residues Ser549 and Ser660. Residues 654 to 833 (SAERRNSIIT…EEINEEDLKE (180 aa)) form a disordered R region region. Phosphoserine; by PKA is present on Ser670. Ser686 bears the Phosphoserine mark. Residue Lys688 forms a Glycyl lysine isopeptide (Lys-Gly) (interchain with G-Cter in ubiquitin) linkage. Phosphoserine occurs at positions 700 and 712. Thr717 is subject to Phosphothreonine. A phosphoserine mark is found at Ser737, Ser769, Ser792, Ser797, and Ser815. The chain crosses the membrane as a helical span at residues 861–881 (LVFVLIWCLVIFLAEVAISLV). Residues 861–1157 (LVFVLIWCLV…AVNSSIDVDS (297 aa)) enclose the ABC transmembrane type-1 2 domain. At 882–920 (VLWLLKKTASQDKGNSTQSINSSYTVIFTSTSTYYVFYI) the chain is on the extracellular side. Asn896 and Asn902 each carry an N-linked (GlcNAc...) asparagine glycan. A discontinuously helical transmembrane segment spans residues 921–941 (YVGVADTLLALGFFRGLPLVH). Topologically, residues 942–992 (TLITVSKILHHKMLHAVLQAPMSTLNALKAGGILNRFSKDIAILDDLLPLT) are cytoplasmic. Residues 993 to 1013 (IFDFVQLLLIVIGAVTVVSAL) traverse the membrane as a helical segment. Residues 1014–1015 (QP) lie on the Extracellular side of the membrane. Residues 1016–1036 (YIFLATVPVIAAFIMLRAYFL) form a helical membrane-spanning segment. At 1037–1097 (HTSQQLKQLE…TANWFLYLST (61 aa)) the chain is on the cytoplasmic side. The helical transmembrane segment at 1098-1118 (LRWFQMRMEIIFVIFFIAITF) threads the bilayer. The Extracellular portion of the chain corresponds to 1119 to 1132 (ISILTTGEGVGAVG). Residues 1133–1153 (IILTLAMNIMGTLQWAVNSSI) traverse the membrane as a helical segment. Over 1154–1484 (DVDSLMRSVS…TEEEVQETRL (331 aa)) the chain is Cytoplasmic. An ABC transporter 2 domain is found at 1214-1447 (MTVKDLTAKY…KSLFRQAISP (234 aa)). ATP-binding positions include Tyr1223 and 1248-1255 (GRTGSGKS). Residues 1390-1484 (RTLKQAFADC…TEEEVQETRL (95 aa)) form an interaction with GORASP2 region. The S-palmitoyl cysteine moiety is linked to residue Cys1399. Phosphoserine occurs at positions 1448 and 1460. Over residues 1456–1465 (HRNSSKHKSR) the composition is skewed to basic residues. Positions 1456–1484 (HRNSSKHKSRSQIAALKEETEEEVQETRL) are disordered. Residues 1474-1484 (ETEEEVQETRL) show a composition bias toward acidic residues. The PDZ-binding motif lies at 1482 to 1484 (TRL).

This sequence belongs to the ABC transporter superfamily. ABCC family. CFTR transporter (TC 3.A.1.202) subfamily. In terms of assembly, monomer; does not require oligomerization for channel activity. May form oligomers in the membrane. Interacts with SLC26A3, SLC26A6 and NHERF1. Interacts with SHANK2. Interacts with MYO6. Interacts (via C-terminus) with GOPC (via PDZ domain); this promotes CFTR internalization and thereby decreases channel activity. Interacts with SLC4A7 through NHERF1. Found in a complex with MYO5B and RAB11A. Interacts with ANO1. Interacts with SLC26A8. Interacts with AHCYL1; the interaction increases CFTR activity. Interacts with CSE1L. The core-glycosylated form interacts with GORASP2 (via PDZ GRASP-type 1 domain) in respone to ER stress. Interacts with MARCHF2; the interaction leads to CFTR ubiqtuitination and degradation. Interacts with ADGRG2. N-glycosylated. Post-translationally, phosphorylated; cAMP treatment promotes phosphorylation and activates the channel. Dephosphorylation decreases the ATPase activity (in vitro). Phosphorylation at PKA sites activates the channel. Phosphorylation at PKC sites enhances the response to phosphorylation by PKA. Phosphorylated by AMPK; this inhibits channel activity. In terms of processing, ubiquitinated, leading to its degradation in the lysosome. Deubiquitination by USP10 in early endosomes enhances its endocytic recycling to the cell membrane. Ubiquitinated by RNF185 during ER stress. Ubiquitinated by MARCHF2.

It localises to the apical cell membrane. It is found in the early endosome membrane. The protein resides in the cell membrane. The protein localises to the recycling endosome membrane. Its subcellular location is the endoplasmic reticulum membrane. It localises to the nucleus. It catalyses the reaction ATP + H2O + closed Cl(-) channel = ADP + phosphate + open Cl(-) channel.. It carries out the reaction chloride(in) = chloride(out). The enzyme catalyses hydrogencarbonate(in) = hydrogencarbonate(out). The catalysed reaction is ATP + H2O = ADP + phosphate + H(+). Epithelial ion channel that plays an important role in the regulation of epithelial ion and water transport and fluid homeostasis. Mediates the transport of chloride ions across the cell membrane. Possesses an intrinsic ATPase activity and utilizes ATP to gate its channel; the passive flow of anions through the channel is gated by cycles of ATP binding and hydrolysis by the ATP-binding domains. The ion channel is also permeable to HCO(3)(-); selectivity depends on the extracellular chloride concentration. Exerts its function also by modulating the activity of other ion channels and transporters. Contributes to the regulation of the pH and the ion content of the epithelial fluid layer. Modulates the activity of the epithelial sodium channel (ENaC) complex, in part by regulating the cell surface expression of the ENaC complex. May regulate bicarbonate secretion and salvage in epithelial cells by regulating the transporter SLC4A7. Can inhibit the chloride channel activity of ANO1. Plays a role in the chloride and bicarbonate homeostasis during sperm epididymal maturation and capacitation. This is Cystic fibrosis transmembrane conductance regulator from Mustela putorius furo (European domestic ferret).